The sequence spans 658 residues: Biosynthetic arginine decarboxylase (658 aa).

Lys127 is modified (N6-(pyridoxal phosphate)lysine). 307 to 317 (FDVGGGLGVDY) is a binding site for substrate.

It belongs to the Orn/Lys/Arg decarboxylase class-II family. SpeA subfamily. Homotetramer. The cofactor is Mg(2+). Pyridoxal 5'-phosphate serves as cofactor.

Its subcellular location is the periplasm. It catalyses the reaction L-arginine + H(+) = agmatine + CO2. It functions in the pathway amine and polyamine biosynthesis; agmatine biosynthesis; agmatine from L-arginine: step 1/1. Its function is as follows. Catalyzes the biosynthesis of agmatine from arginine. The protein is Biosynthetic arginine decarboxylase (speA) of Escherichia coli O157:H7.